The sequence spans 269 residues: 2-dehydro-3-deoxyphosphooctonate aldolase (269 aa).

The protein belongs to the KdsA family.

It localises to the cytoplasm. The enzyme catalyses D-arabinose 5-phosphate + phosphoenolpyruvate + H2O = 3-deoxy-alpha-D-manno-2-octulosonate-8-phosphate + phosphate. It functions in the pathway carbohydrate biosynthesis; 3-deoxy-D-manno-octulosonate biosynthesis; 3-deoxy-D-manno-octulosonate from D-ribulose 5-phosphate: step 2/3. The protein operates within bacterial outer membrane biogenesis; lipopolysaccharide biosynthesis. The polypeptide is 2-dehydro-3-deoxyphosphooctonate aldolase (Chlamydia trachomatis serovar A (strain ATCC VR-571B / DSM 19440 / HAR-13)).